The primary structure comprises 556 residues: Formate--tetrahydrofolate ligase (556 aa).

Threonine 65–serine 72 serves as a coordination point for ATP.

It belongs to the formate--tetrahydrofolate ligase family.

The enzyme catalyses (6S)-5,6,7,8-tetrahydrofolate + formate + ATP = (6R)-10-formyltetrahydrofolate + ADP + phosphate. The protein operates within one-carbon metabolism; tetrahydrofolate interconversion. The sequence is that of Formate--tetrahydrofolate ligase from Streptococcus pneumoniae serotype 19F (strain G54).